Here is a 597-residue protein sequence, read N- to C-terminus: MAELPMSTHLFARLLSRVHAVCAALIEEGALPAGIDLSRVVVEPPKDASHGDMATNAAMVLAKDAKAKPRDLADKIADKLRAEELIDQVAIAGPGFINLTLKPAVWAEALRAVLDAGAGYGRSTVGGGEKVNVEYVSANPTGPMHVGHCRGAVFGDALANLLDTAGYDVTREYYINDAGAQVDVLARSAFLRYREALGETIGEIPEGLYPGDYLKPVGEALKAEHGAALKDMPEAQWLPTVRATAIAMMMEAIKGDLAALNITHEVFFSERSLIEGGRNRVAETIEFLRAKGDVYQGRLPPPKGAPVEDYEDREQTLFRATAYGDDVDRPLLKSDGSYTYFASDIAYHKVKFDAGFANMVDVWGADHGGYIKRMQAAIQAVTAGKGALDVKIVQLVRLLRNGEPVKMSKRAGDFVTLREVVDEVGSDAVRFMMLFRKNDAVLDFDLAKVIEQSKDNPVFYVQYGHARGHSIFRNAREVVPDLPEDSKARAAMLRQAPLERLNDPAELELLKRLALYPRIVEAAAQAHEPHRIAFYLNELASEFHALWTHGRDLPHLRFIINNDAEITRARLAMVQGVVSVLASGLAILGVTAPDEMR.

The 'HIGH' region motif lies at 138 to 148 (ANPTGPMHVGH).

Belongs to the class-I aminoacyl-tRNA synthetase family. In terms of assembly, monomer.

Its subcellular location is the cytoplasm. It carries out the reaction tRNA(Arg) + L-arginine + ATP = L-arginyl-tRNA(Arg) + AMP + diphosphate. This is Arginine--tRNA ligase from Rhodopseudomonas palustris (strain ATCC BAA-98 / CGA009).